A 305-amino-acid chain; its full sequence is Olfactory receptor 4X1 (305 aa).

Residues 1–23 are Extracellular-facing; sequence MVATNNVTEIIFVGFSQNWSEQR. N-linked (GlcNAc...) asparagine glycosylation is found at N6 and N18. Residues 24-47 traverse the membrane as a helical segment; the sequence is VISVMFLLMYTAVVLGNGLIVVTI. Topologically, residues 48-55 are cytoplasmic; it reads LASKVLTS. The chain crosses the membrane as a helical span at residues 56-77; that stretch reads PMYFFLSYLSFVEICYCSVMAP. Residues 78-98 are Extracellular-facing; sequence KLIFDSFIKRKVISLKGCLTQ. A disulfide bridge links C95 with C187. A helical membrane pass occupies residues 99–118; it reads MFSLHFFGGTEAFLLMVMAY. At 119 to 137 the chain is on the cytoplasmic side; the sequence is DRYVAICKPLHYMAIMNQR. Residues 138–156 form a helical membrane-spanning segment; that stretch reads MCGLLVRIAWGGGLLHSVG. Over 157–193 the chain is Extracellular; it reads QTFLIFQLPFCGPNIMDHYFCDVHPVLELACADTFFI. A helical transmembrane segment spans residues 194 to 217; sequence SLLIITNGGSISVVSFFVLMASYL. Over 218–233 the chain is Cytoplasmic; the sequence is IILHFLRSHNLEGQHK. A helical transmembrane segment spans residues 234–256; the sequence is ALSTCASHVTVVDLFFIPCSLVY. The Extracellular portion of the chain corresponds to 257-267; it reads IRPCVTLPADK. A helical membrane pass occupies residues 268-287; the sequence is IVAVFYTVVTPLLNPVIYSF. Residues 288-305 lie on the Cytoplasmic side of the membrane; that stretch reads RNAEVKNAMRRFIGGKVI.

Belongs to the G-protein coupled receptor 1 family.

It localises to the cell membrane. Its function is as follows. Odorant receptor. In Homo sapiens (Human), this protein is Olfactory receptor 4X1 (OR4X1).